Reading from the N-terminus, the 128-residue chain is Translation initiation factor 5A (128 aa).

Position 35 is a hypusine (Lys-35).

It belongs to the eIF-5A family.

The protein resides in the cytoplasm. Functions by promoting the formation of the first peptide bond. The polypeptide is Translation initiation factor 5A (Methanosarcina barkeri (strain Fusaro / DSM 804)).